A 194-amino-acid chain; its full sequence is HTH-type nicotine-responsive transcriptional repressor HdnoR (194 aa).

Residues Val6 to Leu66 enclose the HTH tetR-type domain. The H-T-H motif DNA-binding region spans Ser29–Phe48.

As to quaternary structure, homodimer.

With respect to regulation, 6-hydroxy-D-nicotine and 6-hydroxy-L-nicotine prevent HdnoR from binding to the IR1 DNA. Both 6-hydroxy-nicotine enantiomers prevent DNA-protein complex formation at micromolar concentrations, with the D-enantiomer being twice as potent as the L-enantiomer. A thousand-fold higher L-nicotine concentration is required to elicit a similar effect. In terms of biological role, represses expression of the 6-hydroxy-D-nicotine oxidase (6-hdno). Acts by binding to a gene operator site consisting of two inverted repeats, IR1 (covering the 6-hdno promoter region) and IR2 (situated upstream from the 6-hdno promoter). Binding to one site may stimulate binding of the protein to the second site. In Paenarthrobacter nicotinovorans (Arthrobacter nicotinovorans), this protein is HTH-type nicotine-responsive transcriptional repressor HdnoR.